Consider the following 115-residue polypeptide: SOSS complex subunit C homolog (115 aa).

Belongs to the SOSS-C family.

This is SOSS complex subunit C homolog from Drosophila mojavensis (Fruit fly).